Reading from the N-terminus, the 971-residue chain is Endoplasmic reticulum calcium ATPase srcA (971 aa).

The Cytoplasmic segment spans residues 1-25 (MNNEALAEDPPTPLWELVLEQFKDQ). A helical membrane pass occupies residues 26 to 46 (LVLILLGSAAVSFVLALFEEG). Over 47 to 49 (DDW) the chain is Lumenal. A helical membrane pass occupies residues 50-70 (TAFVDPVVILTILILNAVVGV). The Cytoplasmic portion of the chain corresponds to 71-217 (TQESSAEKAI…PTPLKQKLND (147 aa)). Residues 218–238 (FGDMLAKVITVICVLVWLINV) traverse the membrane as a helical segment. The Lumenal segment spans residues 239–262 (EHFNDPAHGGWAKGAIYYLKIAVS). Residues 263 to 283 (LGVAAIPEGLAVVITTCLALG) traverse the membrane as a helical segment. Val265, Ala266, Ile268, and Glu270 together coordinate Ca(2+). Residues 284–718 (TRKMAAKNAV…GRSIYSNTQQ (435 aa)) lie on the Cytoplasmic side of the membrane. Residue Asp312 is the 4-aspartylphosphate intermediate of the active site. Mg(2+) is bound by residues Asp312 and Thr314. ATP is bound by residues Thr314, Glu402, Arg453, Lys473, Arg518, Arg637, and Lys643. Position 662 (Asp662) interacts with Mg(2+). An ATP-binding site is contributed by Asn665. The helical transmembrane segment at 719-741 (FIRYLISSNIGEVVSIFLTAALG) threads the bilayer. 2 residues coordinate Ca(2+): Asn727 and Glu730. Over 742-750 (MPEALIPVQ) the chain is Lumenal. A helical transmembrane segment spans residues 751–770 (LLWVNLVTDGLPATALSFNP). Residues Asn755, Thr758, and Asp759 each coordinate Ca(2+). At 771 to 795 (PDHDVMRRAPRKRDEPLVGGWLLFR) the chain is on the cytoplasmic side. A helical transmembrane segment spans residues 796 to 816 (YLAIGTYVGAATVFGYIWWFV). Topologically, residues 817-854 (YNPEGPQISFWQLSHFHKCSAQFPEIGCEMFSNEMSRS) are lumenal. Residues 855 to 875 (ASTVSLSILVVIEMLNAMNAL) form a helical membrane-spanning segment. Glu867 is a Ca(2+) binding site. Residues 876-891 (SSSESLLAFPLWNNMM) lie on the Cytoplasmic side of the membrane. Residues 892–912 (LVYAIILSMTLHFAILYIPFL) traverse the membrane as a helical segment. At 913 to 917 (QTLFS) the chain is on the lumenal side. The helical transmembrane segment at 918–938 (ILPLNWTEWKAVLAISAPVVA) threads the bilayer. Over 939–971 (IDELLKYAERRLYTLPAIAGEQQNGVAFKPKKA) the chain is Cytoplasmic.

It belongs to the cation transport ATPase (P-type) (TC 3.A.3) family. It depends on Mg(2+) as a cofactor.

Its subcellular location is the endoplasmic reticulum membrane. It carries out the reaction Ca(2+)(in) + ATP + H2O = Ca(2+)(out) + ADP + phosphate + H(+). Its function is as follows. Magnesium-dependent enzyme catalyzes the hydrolysis of ATP coupled with the translocation of calcium from the cytosol to the endoplasmic reticulum lumen. Its activity is coupled to the unfolded protein response (UPR) and Ca(2+) import into the endoplasmioc reticulum is important for redox homeostasis, virulence, cell wall biosynthesis, and resistance to antifungal compounds that inhibit Ca2+ signaling. With pmrA, promotes radial growth and conidiation. The sequence is that of Endoplasmic reticulum calcium ATPase srcA (srcA) from Aspergillus fumigatus (strain ATCC MYA-4609 / CBS 101355 / FGSC A1100 / Af293) (Neosartorya fumigata).